The primary structure comprises 243 residues: MAAAAAPRSSGKEALPAALGSASEPPRLFDGTTRLYICYFCPFAQRAWIIRNFKGLQDKIELVGIDLQDKPAWYKEKVYEQGTVPSLEHNGKIMGESLDLIKYIDSHFEGPALLPEDPEKRQFADELIAYANAFTKALYSPLISKADLSAETVAALDKIEAALSKFGDGPFFLGQFSLVDIAYVTIIERIQIYYSHIRKYEITNGRPNLEKFIEEINRIEAYTQTKNDPLYLLDLAKTHLKVA.

One can recognise a GST N-terminal domain in the interval 31-112 (GTTRLYICYF…YIDSHFEGPA (82 aa)). Glutathione is bound by residues Lys-70, Val-84, and 96-97 (ES). The region spanning 117-240 (DPEKRQFADE…YLLDLAKTHL (124 aa)) is the GST C-terminal domain.

The protein belongs to the GST superfamily. HSP26 family.

This Oryza sativa subsp. japonica (Rice) protein is Protein IN2-1 homolog A.